The primary structure comprises 165 residues: Transmembrane protein 253 (165 aa).

A run of 3 helical transmembrane segments spans residues 31–51 (LVLA…AVSV), 60–80 (MTTA…IVTL), and 91–111 (LAGL…GVLV). The tract at residues 145 to 165 (EEVPELETGPTVASTAKRTNQ) is disordered. Positions 155-165 (TVASTAKRTNQ) are enriched in polar residues.

The protein resides in the membrane. The protein is Transmembrane protein 253 (TMEM253) of Bos taurus (Bovine).